A 172-amino-acid chain; its full sequence is Myosin regulatory light chain RLC-A (172 aa).

Residues 1-16 are compositionally biased toward basic residues; the sequence is MSSKRAKTKTTKKRPQ. The interval 1–20 is disordered; the sequence is MSSKRAKTKTTKKRPQRATS. Position 19 is a phosphothreonine; by MLCK (Thr-19). Position 20 is a phosphoserine; by MLCK (Ser-20). 3 EF-hand domains span residues 29-64, 98-133, and 134-169; these read SQIQ…MGKN, DPED…MGDR, and FTDE…GAKD. Residues Asp-42, Asn-44, Asp-46, and Asp-53 each coordinate Ca(2+).

Myosin is a hexamer of 2 heavy chains and 4 light chains. Phosphorylation increases the actin-activated myosin ATPase activity and thereby regulates the contractile activity.

Functionally, myosin regulatory subunit that plays an important role in regulation of both smooth muscle and nonmuscle cell contractile activity via its phosphorylation. Implicated in cytokinesis, receptor capping, and cell locomotion. This chain is Myosin regulatory light chain RLC-A (Rlc-a), found in Rattus norvegicus (Rat).